The sequence spans 241 residues: 4-hydroxy-tetrahydrodipicolinate reductase (241 aa).

Residues 7 to 12 (GVNGHM), 74 to 76 (GTT), and 98 to 101 (STNM) each bind NAD(+). His-131 functions as the Proton donor/acceptor in the catalytic mechanism. A (S)-2,3,4,5-tetrahydrodipicolinate-binding site is contributed by His-132. The Proton donor role is filled by Lys-135. 141 to 142 (GS) serves as a coordination point for (S)-2,3,4,5-tetrahydrodipicolinate.

This sequence belongs to the DapB family.

Its subcellular location is the cytoplasm. The enzyme catalyses (S)-2,3,4,5-tetrahydrodipicolinate + NAD(+) + H2O = (2S,4S)-4-hydroxy-2,3,4,5-tetrahydrodipicolinate + NADH + H(+). It carries out the reaction (S)-2,3,4,5-tetrahydrodipicolinate + NADP(+) + H2O = (2S,4S)-4-hydroxy-2,3,4,5-tetrahydrodipicolinate + NADPH + H(+). Its pathway is amino-acid biosynthesis; L-lysine biosynthesis via DAP pathway; (S)-tetrahydrodipicolinate from L-aspartate: step 4/4. In terms of biological role, catalyzes the conversion of 4-hydroxy-tetrahydrodipicolinate (HTPA) to tetrahydrodipicolinate. This chain is 4-hydroxy-tetrahydrodipicolinate reductase, found in Alkaliphilus oremlandii (strain OhILAs) (Clostridium oremlandii (strain OhILAs)).